We begin with the raw amino-acid sequence, 87 residues long: NADH dehydrogenase [ubiquinone] 1 alpha subcomplex subunit 4-like 2 (87 aa).

The protein belongs to the complex I NDUFA4 subunit family.

In Mus musculus (Mouse), this protein is NADH dehydrogenase [ubiquinone] 1 alpha subcomplex subunit 4-like 2 (Ndufa4l2).